The following is a 354-amino-acid chain: Heme A synthase (354 aa).

8 helical membrane passes run 21–41 (VAVW…LGGL), 106–126 (VWGR…ALSG), 139–159 (VFLL…SGLV), 171–191 (AHLA…LDIL), 212–232 (MLGL…VAGL), 268–288 (VQFG…VGWF), 304–324 (AVGL…VMVV), and 326–346 (VWLA…CLWA). His272 is a binding site for heme. His332 is a heme binding site.

It belongs to the COX15/CtaA family. Type 2 subfamily. In terms of assembly, interacts with CtaB. It depends on heme b as a cofactor.

It is found in the cell membrane. The enzyme catalyses Fe(II)-heme o + 2 A + H2O = Fe(II)-heme a + 2 AH2. The protein operates within porphyrin-containing compound metabolism; heme A biosynthesis; heme A from heme O: step 1/1. Catalyzes the conversion of heme O to heme A by two successive hydroxylations of the methyl group at C8. The first hydroxylation forms heme I, the second hydroxylation results in an unstable dihydroxymethyl group, which spontaneously dehydrates, resulting in the formyl group of heme A. The chain is Heme A synthase from Paramagnetospirillum magneticum (strain ATCC 700264 / AMB-1) (Magnetospirillum magneticum).